A 252-amino-acid chain; its full sequence is Imidazole glycerol phosphate synthase subunit HisF (252 aa).

Residues Asp11 and Asp130 contribute to the active site.

The protein belongs to the HisA/HisF family. In terms of assembly, heterodimer of HisH and HisF.

It localises to the cytoplasm. The catalysed reaction is 5-[(5-phospho-1-deoxy-D-ribulos-1-ylimino)methylamino]-1-(5-phospho-beta-D-ribosyl)imidazole-4-carboxamide + L-glutamine = D-erythro-1-(imidazol-4-yl)glycerol 3-phosphate + 5-amino-1-(5-phospho-beta-D-ribosyl)imidazole-4-carboxamide + L-glutamate + H(+). Its pathway is amino-acid biosynthesis; L-histidine biosynthesis; L-histidine from 5-phospho-alpha-D-ribose 1-diphosphate: step 5/9. In terms of biological role, IGPS catalyzes the conversion of PRFAR and glutamine to IGP, AICAR and glutamate. The HisF subunit catalyzes the cyclization activity that produces IGP and AICAR from PRFAR using the ammonia provided by the HisH subunit. This chain is Imidazole glycerol phosphate synthase subunit HisF, found in Alkaliphilus metalliredigens (strain QYMF).